Consider the following 286-residue polypeptide: Elongation factor Ts (286 aa).

An involved in Mg(2+) ion dislocation from EF-Tu region spans residues 82–85; that stretch reads TDFV.

The protein belongs to the EF-Ts family.

The protein localises to the cytoplasm. In terms of biological role, associates with the EF-Tu.GDP complex and induces the exchange of GDP to GTP. It remains bound to the aminoacyl-tRNA.EF-Tu.GTP complex up to the GTP hydrolysis stage on the ribosome. This Hahella chejuensis (strain KCTC 2396) protein is Elongation factor Ts.